Reading from the N-terminus, the 180-residue chain is ATP-dependent protease subunit HslV (180 aa).

T6 is an active-site residue. Residues A164, C167, and T170 each coordinate Na(+).

This sequence belongs to the peptidase T1B family. HslV subfamily. In terms of assembly, a double ring-shaped homohexamer of HslV is capped on each side by a ring-shaped HslU homohexamer. The assembly of the HslU/HslV complex is dependent on binding of ATP.

The protein resides in the cytoplasm. It carries out the reaction ATP-dependent cleavage of peptide bonds with broad specificity.. With respect to regulation, allosterically activated by HslU binding. Functionally, protease subunit of a proteasome-like degradation complex believed to be a general protein degrading machinery. This is ATP-dependent protease subunit HslV from Borrelia hermsii (strain HS1 / DAH).